We begin with the raw amino-acid sequence, 158 residues long: MRSPKVKFLTIFTFCIFITKMSFASNSCSNEAGTMFRIEPNLIKAIALVESNLKKDSIGKNRDKNNNIKSLDYWLMQINQMHIPLLKKRGIIKDERDLLDNPCLNIKIGTEILYNHFSRCGVTWQCLGTYNAGFAMDNQKKRQQYAPKYILYIPGLMN.

Positions 1-24 (MRSPKVKFLTIFTFCIFITKMSFA) are cleaved as a signal peptide.

The protein belongs to the IagB/IpgF/P19 family.

The protein resides in the periplasm. This is Putative peptidoglycan-binding-like protein (pbl) from Escherichia coli (strain K12).